The primary structure comprises 302 residues: uncharacterized protein (302 aa).

The protein belongs to the HAD-like hydrolase superfamily.

The protein resides in the cytoplasm. Its subcellular location is the nucleus. This is an uncharacterized protein from Schizosaccharomyces pombe (strain 972 / ATCC 24843) (Fission yeast).